Here is a 386-residue protein sequence, read N- to C-terminus: Succinate--CoA ligase [ADP-forming] subunit beta (386 aa).

K46, E99, A102, and E107 together coordinate ATP. N199 and D213 together coordinate Mg(2+). Substrate is bound by residues N264 and 321-323 (GIM).

It belongs to the succinate/malate CoA ligase beta subunit family. In terms of assembly, heterotetramer of two alpha and two beta subunits. Mg(2+) serves as cofactor.

The enzyme catalyses succinate + ATP + CoA = succinyl-CoA + ADP + phosphate. It carries out the reaction GTP + succinate + CoA = succinyl-CoA + GDP + phosphate. It participates in carbohydrate metabolism; tricarboxylic acid cycle; succinate from succinyl-CoA (ligase route): step 1/1. Functionally, succinyl-CoA synthetase functions in the citric acid cycle (TCA), coupling the hydrolysis of succinyl-CoA to the synthesis of either ATP or GTP and thus represents the only step of substrate-level phosphorylation in the TCA. The beta subunit provides nucleotide specificity of the enzyme and binds the substrate succinate, while the binding sites for coenzyme A and phosphate are found in the alpha subunit. The chain is Succinate--CoA ligase [ADP-forming] subunit beta from Orientia tsutsugamushi (strain Boryong) (Rickettsia tsutsugamushi).